A 275-amino-acid chain; its full sequence is Large ribosomal subunit protein uL2 (275 aa).

Disordered regions lie at residues 38 to 59 (KKHA…GGHK) and 222 to 275 (GSAM…RKQK). Composition is skewed to basic residues over residues 39–59 (KHAG…GGHK) and 254–275 (MGKK…RKQK).

This sequence belongs to the universal ribosomal protein uL2 family. Part of the 50S ribosomal subunit. Forms a bridge to the 30S subunit in the 70S ribosome.

One of the primary rRNA binding proteins. Required for association of the 30S and 50S subunits to form the 70S ribosome, for tRNA binding and peptide bond formation. It has been suggested to have peptidyltransferase activity; this is somewhat controversial. Makes several contacts with the 16S rRNA in the 70S ribosome. This is Large ribosomal subunit protein uL2 from Herpetosiphon aurantiacus (strain ATCC 23779 / DSM 785 / 114-95).